The chain runs to 286 residues: Type II restriction enzyme NgoMIV (286 aa).

Residues Asp140 and Cys186 each coordinate Mg(2+).

Homotetramer. The cofactor is Mg(2+).

It carries out the reaction Endonucleolytic cleavage of DNA to give specific double-stranded fragments with terminal 5'-phosphates.. A P subtype restriction enzyme that recognizes the double-stranded sequence 5'-GCCGGC-3' and cleaves after G-1. This Neisseria gonorrhoeae protein is Type II restriction enzyme NgoMIV (ngoMIVR).